Reading from the N-terminus, the 220-residue chain is Meiotic nuclear division protein 1 homolog (220 aa).

Positions 76-147 (SKALHARKRR…KVEIEKYQEC (72 aa)) form a coiled coil.

This sequence belongs to the MND1 family.

The protein resides in the nucleus. Required for proper homologous chromosome pairing and efficient cross-over and intragenic recombination during meiosis. Stimulates both DMC1- and RAD51-mediated homologous strand assimilation, which is required for the resolution of meiotic double-strand breaks. This Danio rerio (Zebrafish) protein is Meiotic nuclear division protein 1 homolog.